Here is a 212-residue protein sequence, read N- to C-terminus: Fucoxanthin-chlorophyll a-c binding protein E, chloroplastic (212 aa).

The N-terminal 34 residues, 1 to 34 (MAIACAAAPGLRGAEPFNGAALATSAKSSSAMKM), are a transit peptide targeting the chloroplast. A run of 3 helical transmembrane segments spans residues 76–96 (IAMLAVVGHITQQNTRLPGML), 117–137 (IPPLGTLQIILAIGCHELFVV), and 178–198 (GRAAQMGILAMMVHEQLSNQP).

Belongs to the fucoxanthin chlorophyll protein family. As to quaternary structure, the LHC complex of chromophytic algae is composed of fucoxanthin, chlorophyll A and C bound non-covalently by fucoxanthin chlorophyll proteins (FCPs). The ratio of pigments in this LHC is; fucoxanthin: chlorophyll C: chlorophyll A; (0.6-1): (0.1-0.3): (1).

The protein localises to the plastid. Its subcellular location is the chloroplast thylakoid membrane. Its function is as follows. The light-harvesting complex (LHC) functions as a light receptor, it captures and delivers excitation energy to photosystems with which it is closely associated. Energy is transferred from the carotenoid and chlorophyll C (or B) to chlorophyll A and the photosynthetic reaction centers where it is used to synthesize ATP and reducing power. This is Fucoxanthin-chlorophyll a-c binding protein E, chloroplastic (FCPE) from Macrocystis pyrifera (Giant kelp).